The following is a 262-amino-acid chain: Ribose-5-phosphate isomerase A (262 aa).

Substrate-binding positions include Thr-33 to Thr-36, Asp-89 to Asp-92, and Lys-102 to Gly-105. Residue Glu-111 is the Proton acceptor of the active site. A substrate-binding site is contributed by Lys-129.

This sequence belongs to the ribose 5-phosphate isomerase family. As to quaternary structure, homodimer.

It carries out the reaction aldehydo-D-ribose 5-phosphate = D-ribulose 5-phosphate. It functions in the pathway carbohydrate degradation; pentose phosphate pathway; D-ribose 5-phosphate from D-ribulose 5-phosphate (non-oxidative stage): step 1/1. Its function is as follows. Catalyzes the reversible conversion of ribose-5-phosphate to ribulose 5-phosphate. This chain is Ribose-5-phosphate isomerase A, found in Roseobacter denitrificans (strain ATCC 33942 / OCh 114) (Erythrobacter sp. (strain OCh 114)).